Reading from the N-terminus, the 340-residue chain is Entry-fusion complex protein OPG094 (340 aa).

The interval methionine 1–threonine 20 is disordered. Glycine 2 is lipidated: N-myristoyl glycine; by host. Residues glycine 2 to aspartate 319 are Virion surface-facing. Residues leucine 320–isoleucine 340 form a helical; Signal-anchor for type II membrane protein membrane-spanning segment.

This sequence belongs to the orthopoxvirus OPG086 family. Interacts with OPG143. Component of the entry fusion complex (EFC) composed of OPG053, OPG076, OPG086, OPG094, OPG095, OPG099, OPG107, OPG143, OPG104, OPG147 and OPG155. Except for OPG095 and OPG053, each of the EFC proteins is required for assembly or stability of the complex. In terms of processing, unglycosylated because produced in viral factories instead of the classic ER -Golgi route.

It is found in the virion membrane. Its function is as follows. Component of the entry fusion complex (EFC), which consists of 11 proteins. During cell infection, this complex mediates entry of the virion core into the host cytoplasm by a two-step mechanism consisting of lipid mixing of the viral and cellular membranes and subsequent pore formation. In Vaccinia virus (strain Copenhagen) (VACV), this protein is Entry-fusion complex protein OPG094 (OPG094).